The sequence spans 539 residues: Tripartite motif-containing protein 26 (539 aa).

The RING-type zinc-finger motif lies at 16-57 (CSICLDYLRDPVTIDCGHVFCRSCTTDVRPISGSRPVCPLCK). Residues 97-138 (QDAKLCERHREKLHYYCEDDGKLLCVMCRESREHRPHTAVLM) form a B box-type zinc finger. Zn(2+) contacts are provided by cysteine 102, histidine 105, cysteine 124, and histidine 130. Residues 188–227 (IVAEFEQGHQFLREREEHLLEQLAKLEQELTEGREKFKSR) are a coiled coil. The B30.2/SPRY domain occupies 295–539 (RGLREFQGKL…WPGTRLLLRP (245 aa)). The disordered stretch occupies residues 376–437 (REGWSEDEEE…EEEEEVLESC (62 aa)). Residues 380–434 (SEDEEEGDEEEEGEEEEEEEEAGYGDGYDDWETDEDEESLGDEEEEEEEEEEEVL) are compositionally biased toward acidic residues.

It belongs to the TRIM/RBCC family. As to quaternary structure, interacts with TBK1; this interaction bridges together TBK1 and NEMO in order to activate TBK1. Interacts with INCA1. In terms of processing, autoubiquitinates upon viral infection. In turn, autoubiquitinated TRIM26 recruits NEMO and bridges TBK1-NEMO interaction.

The protein localises to the cytoplasm. The protein resides in the nucleus. It carries out the reaction S-ubiquitinyl-[E2 ubiquitin-conjugating enzyme]-L-cysteine + [acceptor protein]-L-lysine = [E2 ubiquitin-conjugating enzyme]-L-cysteine + N(6)-ubiquitinyl-[acceptor protein]-L-lysine.. Functionally, E3 ubiquitin-protein ligase which regulates the IFN-beta production and antiviral response downstream of various DNA-encoded pattern-recognition receptors (PRRs). Also plays a central role in determining the response to different forms of oxidative stress by controlling levels of DNA glycosylases NEIL1, NEIL3 and NTH1 that are involved in repair of damaged DNA. Promotes nuclear IRF3 ubiquitination and proteasomal degradation. Bridges together TBK1 and NEMO during the innate response to viral infection leading to the activation of TBK1. Positively regulates LPS-mediated inflammatory innate immune response by catalyzing the 'Lys-11'-linked polyubiquitination of TAB1 to enhance its activation and subsequent NF-kappa-B and MAPK signaling. In a manner independent of its catalytic activity, inhibits WWP2, a SOX2-directed E3 ubiquitin ligase, and thus protects SOX2 from polyubiquitination and proteasomal degradation. Ubiquitinates the histone acetyltransferase protein complex component PHF20 and thereby triggers its degradation in the nucleus after its recruitment by the histone demethylase KDM6B, serving as a scaffold protein. Upon induction by TGF-beta, ubiquitinates the TFIID component TAF7 for proteasomal degradation. Induces ferroptosis by ubiquitinating SLC7A11, a critical protein for lipid reactive oxygen species (ROS) scavenging. Inhibits directly hepatitis B virus replication by mediating HBX ubiquitination and subsequent degradation. In terms of biological role, (Microbial infection) Promotes herpes simplex virus type 2/HHV-2 infection in vaginal epithelial cells by decreasing the nuclear localization of IRF3, the primary mediator of type I interferon activation. This is Tripartite motif-containing protein 26 (TRIM26) from Homo sapiens (Human).